Consider the following 141-residue polypeptide: Large ribosomal subunit protein bL17 (141 aa).

Belongs to the bacterial ribosomal protein bL17 family. Part of the 50S ribosomal subunit. Contacts protein L32.

The sequence is that of Large ribosomal subunit protein bL17 from Gluconacetobacter diazotrophicus (strain ATCC 49037 / DSM 5601 / CCUG 37298 / CIP 103539 / LMG 7603 / PAl5).